The primary structure comprises 155 residues: Small ribosomal subunit protein uS7cz/uS7cy (155 aa).

It belongs to the universal ribosomal protein uS7 family. As to quaternary structure, part of the 30S ribosomal subunit.

Its subcellular location is the plastid. The protein resides in the chloroplast. Its function is as follows. One of the primary rRNA binding proteins, it binds directly to 16S rRNA where it nucleates assembly of the head domain of the 30S subunit. The protein is Small ribosomal subunit protein uS7cz/uS7cy (rps7-A) of Drimys granadensis.